Consider the following 125-residue polypeptide: UPF0102 protein PBPRA3228 (125 aa).

It belongs to the UPF0102 family.

This is UPF0102 protein PBPRA3228 from Photobacterium profundum (strain SS9).